Consider the following 310-residue polypeptide: Glycine--tRNA ligase alpha subunit (310 aa).

The protein belongs to the class-II aminoacyl-tRNA synthetase family. As to quaternary structure, tetramer of two alpha and two beta subunits.

It is found in the cytoplasm. The enzyme catalyses tRNA(Gly) + glycine + ATP = glycyl-tRNA(Gly) + AMP + diphosphate. This is Glycine--tRNA ligase alpha subunit from Agrobacterium fabrum (strain C58 / ATCC 33970) (Agrobacterium tumefaciens (strain C58)).